Consider the following 277-residue polypeptide: Phosphate import ATP-binding protein PstB 2 (277 aa).

Positions 31–272 constitute an ABC transporter domain; that stretch reads IEVPGLSLFY…PAKKQTEDYI (242 aa). 63-70 lines the ATP pocket; it reads GPSGCGKS.

This sequence belongs to the ABC transporter superfamily. Phosphate importer (TC 3.A.1.7) family. In terms of assembly, the complex is composed of two ATP-binding proteins (PstB), two transmembrane proteins (PstC and PstA) and a solute-binding protein (PstS).

The protein resides in the cell inner membrane. The catalysed reaction is phosphate(out) + ATP + H2O = ADP + 2 phosphate(in) + H(+). Functionally, part of the ABC transporter complex PstSACB involved in phosphate import. Responsible for energy coupling to the transport system. This Pseudomonas syringae pv. tomato (strain ATCC BAA-871 / DC3000) protein is Phosphate import ATP-binding protein PstB 2.